The following is an 81-amino-acid chain: Short neurotoxin 2 (81 aa).

The first 21 residues, 1-21 (MKTLLLTLVVVTIVCLDLGYT), serve as a signal peptide directing secretion. Disulfide bonds link Cys24-Cys43, Cys38-Cys60, Cys62-Cys73, and Cys74-Cys79.

It belongs to the three-finger toxin family. Short-chain subfamily. Type I alpha-neurotoxin sub-subfamily. As to expression, expressed by the venom gland.

It is found in the secreted. In terms of biological role, binds to muscle nicotinic acetylcholine receptor (nAChR) and inhibit acetylcholine from binding to the receptor, thereby impairing neuromuscular transmission. The sequence is that of Short neurotoxin 2 from Hydrophis hardwickii (Hardwick's spine-bellied seasnake).